The following is a 281-amino-acid chain: Pantothenate synthetase (281 aa).

An ATP-binding site is contributed by 30–37 (MGYLHEGH). His-37 functions as the Proton donor in the catalytic mechanism. Gln-61 provides a ligand contact to (R)-pantoate. Beta-alanine is bound at residue Gln-61. Residue 147 to 150 (GQKD) participates in ATP binding. Gln-153 lines the (R)-pantoate pocket. ATP contacts are provided by residues Val-176 and 184–187 (MSSR).

The protein belongs to the pantothenate synthetase family. Homodimer.

It localises to the cytoplasm. The enzyme catalyses (R)-pantoate + beta-alanine + ATP = (R)-pantothenate + AMP + diphosphate + H(+). Its pathway is cofactor biosynthesis; (R)-pantothenate biosynthesis; (R)-pantothenate from (R)-pantoate and beta-alanine: step 1/1. Catalyzes the condensation of pantoate with beta-alanine in an ATP-dependent reaction via a pantoyl-adenylate intermediate. The protein is Pantothenate synthetase of Acetivibrio thermocellus (strain ATCC 27405 / DSM 1237 / JCM 9322 / NBRC 103400 / NCIMB 10682 / NRRL B-4536 / VPI 7372) (Clostridium thermocellum).